Reading from the N-terminus, the 167-residue chain is Gametocyte-specific factor 1 (167 aa).

S8 carries the phosphoserine modification. 2 consecutive CHHC U11-48K-type zinc fingers follow at residues 14–41 (LLQC…RKNH) and 48–75 (LATC…DDKS). Zn(2+) is bound by residues C17, H23, H33, C37, C51, H57, H67, and C71.

Belongs to the UPF0224 (FAM112) family. As to expression, expressed abundantly in adult testis, at moderate levels in unfertilized eggs and ovaries and weakly in embryonic stem cells.

It localises to the cytoplasm. Its function is as follows. Required for spermatogenesis and is involved in the suppression of retrotransposon transcription in male germ cells. The sequence is that of Gametocyte-specific factor 1 from Mus musculus (Mouse).